We begin with the raw amino-acid sequence, 376 residues long: Glutamate 5-kinase (376 aa).

K15 serves as a coordination point for ATP. 3 residues coordinate substrate: S56, D143, and N155. Residue 175–176 (SD) coordinates ATP. The region spanning 281–358 (KGTLTIDAGA…PDVMMILGIT (78 aa)) is the PUA domain.

Belongs to the glutamate 5-kinase family.

The protein resides in the cytoplasm. It catalyses the reaction L-glutamate + ATP = L-glutamyl 5-phosphate + ADP. Its pathway is amino-acid biosynthesis; L-proline biosynthesis; L-glutamate 5-semialdehyde from L-glutamate: step 1/2. In terms of biological role, catalyzes the transfer of a phosphate group to glutamate to form L-glutamate 5-phosphate. The chain is Glutamate 5-kinase from Rhodopseudomonas palustris (strain ATCC BAA-98 / CGA009).